Reading from the N-terminus, the 209-residue chain is Large ribosomal subunit protein uL3 (209 aa).

Residues 141 to 164 (RAVGSMGGSSDPSRTFKSKKMPGH) form a disordered region.

It belongs to the universal ribosomal protein uL3 family. Part of the 50S ribosomal subunit. Forms a cluster with proteins L14 and L19.

Its function is as follows. One of the primary rRNA binding proteins, it binds directly near the 3'-end of the 23S rRNA, where it nucleates assembly of the 50S subunit. The polypeptide is Large ribosomal subunit protein uL3 (Clostridium acetobutylicum (strain ATCC 824 / DSM 792 / JCM 1419 / IAM 19013 / LMG 5710 / NBRC 13948 / NRRL B-527 / VKM B-1787 / 2291 / W)).